We begin with the raw amino-acid sequence, 331 residues long: MVKVGINGFGRIGRVVFRAAQMRPDIEIVGINDLLDAEYMAYSLKYDSTHGRFDGTVEVIKGALVVNGKSIRVTSERDPANLKWDEIGVEVVVESTGLFLTQETAHKHIEAGARRVVMTGPPKDDTPMFVMGVNHTTYKGQPIISNASCTTNCLAPLAKVVNEKYGIVEGLMTTVHATTATQKTVDGPSLKDWRGGRGASQNIIPSSTGAPKAVGKVYPALDGKLTGMAFRVPTPNVSVVDLTVRLEKPATYKDICAAIKAAAEGEMKGILGYTDDEVVSSDFNGVALTSVFDVKAGISLNDHFVKLVSWYDNETGYSHKVLDLILHTSAR.

Residues 11–12 (RI), aspartate 33, and arginine 77 contribute to the NAD(+) site. D-glyceraldehyde 3-phosphate-binding positions include 148 to 150 (SCT), threonine 179, 208 to 209 (TG), and arginine 231. The active-site Nucleophile is the cysteine 149. Residue asparagine 313 participates in NAD(+) binding.

It belongs to the glyceraldehyde-3-phosphate dehydrogenase family. In terms of assembly, homotetramer.

Its subcellular location is the cytoplasm. The catalysed reaction is D-glyceraldehyde 3-phosphate + phosphate + NAD(+) = (2R)-3-phospho-glyceroyl phosphate + NADH + H(+). It functions in the pathway carbohydrate degradation; glycolysis; pyruvate from D-glyceraldehyde 3-phosphate: step 1/5. The protein is Glyceraldehyde-3-phosphate dehydrogenase, cytosolic (GAPC) of Leishmania mexicana.